A 227-amino-acid chain; its full sequence is Large ribosomal subunit protein uL1 (227 aa).

This sequence belongs to the universal ribosomal protein uL1 family. Part of the 50S ribosomal subunit.

Functionally, binds directly to 23S rRNA. The L1 stalk is quite mobile in the ribosome, and is involved in E site tRNA release. Protein L1 is also a translational repressor protein, it controls the translation of the L11 operon by binding to its mRNA. The chain is Large ribosomal subunit protein uL1 from Mesoplasma florum (strain ATCC 33453 / NBRC 100688 / NCTC 11704 / L1) (Acholeplasma florum).